Consider the following 105-residue polypeptide: Thioredoxin (105 aa).

The 104-residue stretch at 2–105 (VKQIESKYAF…KLEATINELI (104 aa)) folds into the Thioredoxin domain. K3 carries the N6-acetyllysine modification. The residue at position 8 (K8) is an N6-succinyllysine. Catalysis depends on nucleophile residues C32 and C35. An intrachain disulfide couples C32 to C35. An N6-acetyllysine modification is found at K39. 2 positions are modified to S-nitrosocysteine: C62 and C69. C73 is subject to S-nitrosocysteine; alternate. At K94 the chain carries N6-acetyllysine; alternate. K94 carries the post-translational modification N6-succinyllysine; alternate.

The protein belongs to the thioredoxin family. Homodimer; disulfide-linked. Interacts with TXNIP through the redox-active site. Interacts with MAP3K5 and CASP3. Interacts with APEX1; the interaction stimulates the FOS/JUN AP-1 DNA-binding activity in a redox-dependent manner. In terms of processing, in the fully reduced protein, both Cys-69 and Cys-73 are nitrosylated in response to nitric oxide (NO). When two disulfide bonds are present in the protein, only Cys-73 is nitrosylated. Cys-73 can serve as donor for nitrosylation of target proteins.

Its subcellular location is the nucleus. The protein localises to the cytoplasm. It localises to the secreted. Its function is as follows. Participates in various redox reactions through the reversible oxidation of its active center dithiol to a disulfide and catalyzes dithiol-disulfide exchange reactions. Plays a role in the reversible S-nitrosylation of cysteine residues in target proteins, and thereby contributes to the response to intracellular nitric oxide. Nitrosylates the active site Cys of CASP3 in response to nitric oxide (NO), and thereby inhibits caspase-3 activity. Induces the FOS/JUN AP-1 DNA binding activity in ionizing radiation (IR) cells through its oxidation/reduction status and stimulates AP-1 transcriptional activity. This Bos taurus (Bovine) protein is Thioredoxin (TXN).